The sequence spans 86 residues: Large ribosomal subunit protein eL20 (86 aa).

Belongs to the eukaryotic ribosomal protein eL20 family. Part of the 50S ribosomal subunit. Binds 23S rRNA.

The protein is Large ribosomal subunit protein eL20 of Metallosphaera sedula (strain ATCC 51363 / DSM 5348 / JCM 9185 / NBRC 15509 / TH2).